A 163-amino-acid polypeptide reads, in one-letter code: Transcription elongation factor GreA (163 aa).

Residues 11–38 adopt a coiled-coil conformation; it reads FKQLEKELDRLKKERPGVIQAIKEAREE.

The protein belongs to the GreA/GreB family.

Functionally, necessary for efficient RNA polymerase transcription elongation past template-encoded arresting sites. The arresting sites in DNA have the property of trapping a certain fraction of elongating RNA polymerases that pass through, resulting in locked ternary complexes. Cleavage of the nascent transcript by cleavage factors such as GreA or GreB allows the resumption of elongation from the new 3'terminus. GreA releases sequences of 2 to 3 nucleotides. The protein is Transcription elongation factor GreA of Nitratidesulfovibrio vulgaris (strain ATCC 29579 / DSM 644 / CCUG 34227 / NCIMB 8303 / VKM B-1760 / Hildenborough) (Desulfovibrio vulgaris).